Reading from the N-terminus, the 505-residue chain is ATP synthase subunit alpha (505 aa).

170 to 177 (GDRQTGKS) contributes to the ATP binding site.

Belongs to the ATPase alpha/beta chains family. In terms of assembly, F-type ATPases have 2 components, CF(1) - the catalytic core - and CF(0) - the membrane proton channel. CF(1) has five subunits: alpha(3), beta(3), gamma(1), delta(1), epsilon(1). CF(0) has four main subunits: a(1), b(1), b'(1) and c(9-12).

It localises to the cellular thylakoid membrane. The enzyme catalyses ATP + H2O + 4 H(+)(in) = ADP + phosphate + 5 H(+)(out). Functionally, produces ATP from ADP in the presence of a proton gradient across the membrane. The alpha chain is a regulatory subunit. In Prochlorococcus marinus (strain AS9601), this protein is ATP synthase subunit alpha.